The sequence spans 157 residues: Isotocin-neurophysin IT 1 (157 aa).

Residues 1-20 (MFGTSVSALCLLFLLSVCTA) form the signal peptide. A disulfide bridge connects residues cysteine 21 and cysteine 26. A Glycine amide modification is found at glycine 29. Intrachain disulfides connect cysteine 42-cysteine 86, cysteine 45-cysteine 59, cysteine 53-cysteine 76, cysteine 60-cysteine 66, cysteine 93-cysteine 106, cysteine 100-cysteine 118, and cysteine 107-cysteine 112.

It belongs to the vasopressin/oxytocin family. Seven disulfide bonds are present in neurophysin.

Its subcellular location is the secreted. Its function is as follows. Isotocin causes contraction of smooth muscles. The protein is Isotocin-neurophysin IT 1 of Oncorhynchus masou (Cherry salmon).